Here is a 164-residue protein sequence, read N- to C-terminus: Crossover junction endodeoxyribonuclease RuvC (164 aa).

Catalysis depends on residues D7, E67, and D139. Mg(2+) is bound by residues D7, E67, and D139.

This sequence belongs to the RuvC family. Homodimer which binds Holliday junction (HJ) DNA. The HJ becomes 2-fold symmetrical on binding to RuvC with unstacked arms; it has a different conformation from HJ DNA in complex with RuvA. In the full resolvosome a probable DNA-RuvA(4)-RuvB(12)-RuvC(2) complex forms which resolves the HJ. It depends on Mg(2+) as a cofactor.

The protein localises to the cytoplasm. The catalysed reaction is Endonucleolytic cleavage at a junction such as a reciprocal single-stranded crossover between two homologous DNA duplexes (Holliday junction).. Its function is as follows. The RuvA-RuvB-RuvC complex processes Holliday junction (HJ) DNA during genetic recombination and DNA repair. Endonuclease that resolves HJ intermediates. Cleaves cruciform DNA by making single-stranded nicks across the HJ at symmetrical positions within the homologous arms, yielding a 5'-phosphate and a 3'-hydroxyl group; requires a central core of homology in the junction. The consensus cleavage sequence is 5'-(A/T)TT(C/G)-3'. Cleavage occurs on the 3'-side of the TT dinucleotide at the point of strand exchange. HJ branch migration catalyzed by RuvA-RuvB allows RuvC to scan DNA until it finds its consensus sequence, where it cleaves and resolves the cruciform DNA. This chain is Crossover junction endodeoxyribonuclease RuvC, found in Geobacter metallireducens (strain ATCC 53774 / DSM 7210 / GS-15).